The sequence spans 187 residues: Large ribosomal subunit protein uL5 (187 aa).

It belongs to the universal ribosomal protein uL5 family. In terms of assembly, part of the 50S ribosomal subunit; part of the 5S rRNA/L5/L18/L25 subcomplex. Contacts the 5S rRNA and the P site tRNA. Forms a bridge to the 30S subunit in the 70S ribosome.

Its function is as follows. This is one of the proteins that bind and probably mediate the attachment of the 5S RNA into the large ribosomal subunit, where it forms part of the central protuberance. In the 70S ribosome it contacts protein S13 of the 30S subunit (bridge B1b), connecting the 2 subunits; this bridge is implicated in subunit movement. Contacts the P site tRNA; the 5S rRNA and some of its associated proteins might help stabilize positioning of ribosome-bound tRNAs. This chain is Large ribosomal subunit protein uL5, found in Mycobacterium leprae (strain Br4923).